We begin with the raw amino-acid sequence, 331 residues long: MATDFSSIPIIDISPLLAKADDPKMAEDPGVLEVVKQLDKACTEAGFFYVKGHGFPETLLKEVRDVTRRFFELSYEEKAKIKMTPAAGFRGYQRLGENITKGVPDMHEAIDCYREVTKDMYGDLGKVMEGSNQWPQNPPTFKVLMEEYVSLCRDLARKIMRGIALALGGSPNEFEGQRAGDPFWVMRLIGYPGVSSVNGTNVHKNDIGCGAHTDYGLLTLLNQDDDVNALQVRNLSGEWITAPPVPGTFVCNIGDMLKIYSNGLYESTLHRVINNNSKYRVSVVYFYETNFDTAVEPLDTHKTRANGNKEFKRAVYGEHLTGKVLTNFVDL.

Residues 182-289 form the Fe2OG dioxygenase domain; it reads PFWVMRLIGY…RVSVVYFYET (108 aa). Fe cation is bound by residues His212, Asp214, and His270. Arg280 serves as a coordination point for 2-oxoglutarate.

It belongs to the iron/ascorbate-dependent oxidoreductase family. The cofactor is Fe(2+).

The protein localises to the cytoplasm. It is found in the cytosol. The catalysed reaction is L-homoarginine + 2-oxoglutarate + O2 = 6-hydroxy-L-homoarginine + succinate + CO2. In terms of biological role, 2-oxoglutarate-dependent dioxygenase catalyzing homoarginine 6-hydroxylation thus producing 6-hydroxy-L-homoarginine. Guanidine (Gd) is in turn synthesized by the spontaneous conversion of 6-hydroxy-L-homoarginine to (S)-2-amino-6-oxohexanoate (RHEA:79843); guanidine is a nitrogen-rich compound that can serve as a defense or signaling substance. The protein is Homoarginine-6-hydroxylase 2-ODD-C23 of Glycine max (Soybean).